The sequence spans 428 residues: Synaptotagmin-1 (428 aa).

Over 1–67 (MDSLLARVKR…KDKLINEIEN (67 aa)) the chain is Vesicular. The disordered stretch occupies residues 16–50 (ALNPAQEGVTGGPDAAGLPDVSTSSPGGGGAGDKL). The chain crosses the membrane as a helical span at residues 68–92 (LPIWAIVLIIAGSLLFLVCCVYCVC). Over 93–428 (RRSCRKRKKK…HTLQEVPEKN (336 aa)) the chain is Cytoplasmic. The residue at position 123 (serine 123) is a Phosphoserine; by PRKC2. The tract at residues 147 to 395 (STKSEVKLGK…PIGRCVLGCN (249 aa)) is phospholipid binding. C2 domains lie at 153-272 (KLGK…EDWK) and 286-419 (KLGD…AQWH). Ca(2+)-binding residues include aspartate 184, aspartate 190, aspartate 242, phenylalanine 243, aspartate 244, serine 247, lysine 248, aspartate 250, aspartate 317, aspartate 323, aspartate 377, and aspartate 379.

It belongs to the synaptotagmin family. As to quaternary structure, binds SNAP25. Isoform 3 binds SNAP25 with higher affinity. It depends on Ca(2+) as a cofactor.

Its subcellular location is the cytoplasmic vesicle. The protein localises to the secretory vesicle. The protein resides in the synaptic vesicle membrane. It localises to the synapse. Functionally, acts as inhibitor of neurotransmitter release. Overexpression leads to a decrease in the amplitude of the excitatory postsynaptic potential in dissected cholinergic and glutaminergic neurons while depletion with antisense oligonucleotides leads to an increase. Overexpression of isoform 1 blocks the reversal of synaptic depression by serotonin in sensory neurons. The chain is Synaptotagmin-1 (SYT1) from Aplysia californica (California sea hare).